The primary structure comprises 351 residues: Homoserine O-acetyltransferase (351 aa).

The 284-residue stretch at 51 to 334 (VIWVLHALTG…IYGHDAFLIE (284 aa)) folds into the AB hydrolase-1 domain. The active-site Nucleophile is Ser-146. Substrate is bound at residue Arg-212. Catalysis depends on residues Asp-299 and His-328. Residue Asp-329 participates in substrate binding.

The protein belongs to the AB hydrolase superfamily. MetX family. Homodimer.

The protein resides in the cytoplasm. The enzyme catalyses L-homoserine + acetyl-CoA = O-acetyl-L-homoserine + CoA. The protein operates within amino-acid biosynthesis; L-methionine biosynthesis via de novo pathway; O-acetyl-L-homoserine from L-homoserine: step 1/1. Its function is as follows. Transfers an acetyl group from acetyl-CoA to L-homoserine, forming acetyl-L-homoserine. The protein is Homoserine O-acetyltransferase of Cyclobacterium marinum (strain ATCC 25205 / DSM 745 / LMG 13164 / NCIMB 1802) (Flectobacillus marinus).